The sequence spans 100 residues: Large ribosomal subunit protein uL23 (100 aa).

The protein belongs to the universal ribosomal protein uL23 family. In terms of assembly, part of the 50S ribosomal subunit. Contacts protein L29, and trigger factor when it is bound to the ribosome.

In terms of biological role, one of the early assembly proteins it binds 23S rRNA. One of the proteins that surrounds the polypeptide exit tunnel on the outside of the ribosome. Forms the main docking site for trigger factor binding to the ribosome. In Buchnera aphidicola subsp. Baizongia pistaciae (strain Bp), this protein is Large ribosomal subunit protein uL23.